We begin with the raw amino-acid sequence, 171 residues long: Dual specificity protein phosphatase OPG106 (171 aa).

The protein belongs to the protein-tyrosine phosphatase family. Non-receptor class dual specificity subfamily. As to quaternary structure, homodimer.

It localises to the virion. The protein localises to the host cytoplasm. The catalysed reaction is O-phospho-L-tyrosyl-[protein] + H2O = L-tyrosyl-[protein] + phosphate. It catalyses the reaction O-phospho-L-seryl-[protein] + H2O = L-seryl-[protein] + phosphate. Functionally, serine/tyrosine phosphatase which down-regulates cellular antiviral response by dephosphorylating activated host STAT1 and blocking interferon (IFN)-stimulated innate immune responses. Dephosphorylates the OPG144 protein. In Monkeypox virus, this protein is Dual specificity protein phosphatase OPG106 (OPG106).